The sequence spans 227 residues: PKHD-type hydroxylase ACIAD0531 (227 aa).

A Fe2OG dioxygenase domain is found at 78–178 (HIIPPLFNRY…RFASFFWVQS (101 aa)). Fe cation is bound by residues H96, D98, and H159. R169 provides a ligand contact to 2-oxoglutarate.

The cofactor is Fe(2+). It depends on L-ascorbate as a cofactor.

The chain is PKHD-type hydroxylase ACIAD0531 from Acinetobacter baylyi (strain ATCC 33305 / BD413 / ADP1).